Consider the following 509-residue polypeptide: UDP-N-acetylmuramoylalanine--D-glutamate ligase (509 aa).

Residue 116–122 (GTNGKST) participates in ATP binding.

Belongs to the MurCDEF family.

Its subcellular location is the cytoplasm. The catalysed reaction is UDP-N-acetyl-alpha-D-muramoyl-L-alanine + D-glutamate + ATP = UDP-N-acetyl-alpha-D-muramoyl-L-alanyl-D-glutamate + ADP + phosphate + H(+). It functions in the pathway cell wall biogenesis; peptidoglycan biosynthesis. In terms of biological role, cell wall formation. Catalyzes the addition of glutamate to the nucleotide precursor UDP-N-acetylmuramoyl-L-alanine (UMA). This Wolbachia pipientis wMel protein is UDP-N-acetylmuramoylalanine--D-glutamate ligase.